The chain runs to 958 residues: MASSLDLLKLISERGADSRGASDIVEQQAVKQLLEQVDYSKRSKKINIRNKLTPDEENAFRARYGGAFDLNLTQQYNAPHSLAGALRIAEHYDCLSSFPPLDPIIDFGGSWWHHYSRKDTRIHSCCPVLGVRDAARHEERLCRMRKLLQECDDREDLPDFCIDRAESCSVQADWAICIHGGYDMGYTGLCEAMHSHGVRILRGTIMFDGAMLFDNEGVLPLLKCRWMKSGKGKSEVIKFDFMNESTLSYIHSWTNLGSFLTESVHVIGGTTYLLERELLKCNIMTYKIVATNLKCPKETLRHCVWFENISQYVAVNIPEDWNLTHWKPVRVAKTTVREVEEIAFRCFKENKEWTENMKAIASILSAKSSTVIINGQAIMAGERLNIDEYHLVAFALTMNLYQKYENIRNFYSEMEWKGWVNHFKTRFWWGGSTATSSTGKIREFLAGKFPWLRLDSYKDSFVFLSKISDVKEFENDSVPISRLRSFFSSEDLMERIELELESAQKRRREKKKKEVEKIDEEEFQDAIDIPNDAVRDDAKPEKEPKPEVTVGAEPTGPEEASRHFAIKEFSDYCRRLDCNAVSNLRRLWAIAGCDGRTARNKSILETYHRVDDMINLHYPGGQWLYPKKYDYEVGFNDSGLGPKFDDELYVVDKSCICANYQVLSKNTDSLKAPSCKISLCDGVAGCGKTTAIKSASNIAEHLVVTANKKSAEDVREALFPHNPSSEIAFKVIRTADSALMHGLPRCKRLLVDEAGLLHYGQLLAVAALCKCQSVLAFGDTEQISFKSRDATFRLKYGDLQFDSRDIVTETWRCPQDVISAVQTLKRGGNRTSKYLGWKSHSKVSRSISHKEIASPLQVTLSREKFYLTMTQADKAALVSRAKDFPELDKAWIEKHIKTVHEAQGVSVDHAVLVRLKSTKCDLFKTEEYCLVALTRHKITFEYLYVGMLSGDLIFRSIS.

The segment at 49–380 (RNKLTPDEEN…VIINGQAIMA (332 aa)) is methyltransferase. An Alphavirus-like MT domain is found at 71 to 260 (NLTQQYNAPH…HSWTNLGSFL (190 aa)). The disordered stretch occupies residues 529-557 (IPNDAVRDDAKPEKEPKPEVTVGAEPTGP). A compositionally biased stretch (basic and acidic residues) spans 533-546 (AVRDDAKPEKEPKP). The 156-residue stretch at 652–807 (DKSCICANYQ…DLQFDSRDIV (156 aa)) folds into the (+)RNA virus helicase ATP-binding domain. The tract at residues 680-943 (CDGVAGCGKT…TRHKITFEYL (264 aa)) is ATP-dependent helicase. 682–689 (GVAGCGKT) contacts ATP. The (+)RNA virus helicase C-terminal domain maps to 808 to 958 (TETWRCPQDV…SGDLIFRSIS (151 aa)).

Belongs to the bromoviridae replication protein 1a family. As to quaternary structure, interacts with RNA-directed RNA polymerase 2a.

Its subcellular location is the host endoplasmic reticulum membrane. Functionally, involved in the virus replication. Contains a helicase domain and a methyltransferase domain. The methyltransferase domain is probably involved in viral RNA capping. Involved in the formation of ER membrane spherular invaginations in which RNA replication complexes form. This is Replication protein 1a from Cowpea chlorotic mottle virus (CCMV).